Consider the following 346-residue polypeptide: GTPase Obg (346 aa).

In terms of domain architecture, Obg spans 1–158 (MFIDKAKIYV…RWIELELKLL (158 aa)). In terms of domain architecture, OBG-type G spans 159–330 (ADVGIIGFPN…LINLIRETRD (172 aa)). GTP contacts are provided by residues 165 to 172 (GFPNAGKS), 190 to 194 (FTTLT), 212 to 215 (DIPG), 282 to 285 (NKID), and 311 to 313 (SLI). The Mg(2+) site is built by Ser172 and Thr192.

Belongs to the TRAFAC class OBG-HflX-like GTPase superfamily. OBG GTPase family. As to quaternary structure, monomer. Requires Mg(2+) as cofactor.

Its subcellular location is the cytoplasm. Its function is as follows. An essential GTPase which binds GTP, GDP and possibly (p)ppGpp with moderate affinity, with high nucleotide exchange rates and a fairly low GTP hydrolysis rate. Plays a role in control of the cell cycle, stress response, ribosome biogenesis and in those bacteria that undergo differentiation, in morphogenesis control. The sequence is that of GTPase Obg from Sulfurihydrogenibium sp. (strain YO3AOP1).